The sequence spans 319 residues: Acetyl-coenzyme A carboxylase carboxyl transferase subunit alpha (319 aa).

Residues 35-292 form the CoA carboxyltransferase C-terminal domain; the sequence is EISKLMRRLV…KKTIAEALAE (258 aa).

The protein belongs to the AccA family. In terms of assembly, acetyl-CoA carboxylase is a heterohexamer composed of biotin carboxyl carrier protein (AccB), biotin carboxylase (AccC) and two subunits each of ACCase subunit alpha (AccA) and ACCase subunit beta (AccD).

The protein resides in the cytoplasm. It carries out the reaction N(6)-carboxybiotinyl-L-lysyl-[protein] + acetyl-CoA = N(6)-biotinyl-L-lysyl-[protein] + malonyl-CoA. Its pathway is lipid metabolism; malonyl-CoA biosynthesis; malonyl-CoA from acetyl-CoA: step 1/1. Its function is as follows. Component of the acetyl coenzyme A carboxylase (ACC) complex. First, biotin carboxylase catalyzes the carboxylation of biotin on its carrier protein (BCCP) and then the CO(2) group is transferred by the carboxyltransferase to acetyl-CoA to form malonyl-CoA. This chain is Acetyl-coenzyme A carboxylase carboxyl transferase subunit alpha, found in Desulfitobacterium hafniense (strain DSM 10664 / DCB-2).